The primary structure comprises 763 residues: MALAHTLGFPRIGRDRELKKALEAYWKGELDQPGLLQVGRELRRQHWQLQKDAGIELLPVGDFAWYDQVLAHSLAFGVIPERFRPADGQPTLDTLFAMARGVAQGCCGGAHAQEMTKWFDTNYHYLVPEFTVDQAFSLSWTQLFEEVDEALALGHAVKPVLIGPLSYLWLGKAKGGEFDRLELLERLLPVYGEIFQGLAARGVEWVQIDEPILVLDLPQAWKNAFERAYNLIQREPLKKLVATYFGGLEDNLGLAAGLPVDGLHIDLVRAPGQYPTILDRLPAYKVLSLGLVNGRNVWRCDLEKALEVLAHAHERLGERLWVAPSCSLLHSPVDLCREDQLDEELQSWLAFAVQKCEEVAILARALVEPEAPEVRQAFEVSRRVEASRRRSTRIHKREVQARLAAVRPQDSRRASAFAERAVQQRARLELPAFPTTTIGSFPQTSAIRLARQSWKQGRLSQAEYTEAMHSEIRHAVQVQERLGLDVLVHGEAERNDMVEYFAEQLDGYAFTRFGWVQSYGSRCVKPAVIYGDLSRPRPMTVEWIRYAQSLTGKVMKGMLTGPVTMLMWSFPREDVSREVQARQLALALRDEVSDLEQAGIRIVQIDEAAFREGLPLRRADWPHYLEWATEAFRLCASGVRDETQIHTHMCYSEFNDVIESIAAMDADVITIETSRSDMELLEAFEAFAYPNEIGPGVYDIHSPRVPAVEDMVKLLSKAAERIPAARLWVNPDCGLKTRAWAETEAALANMVAAARQLRQANLA.

Residues 16–19 (RELK) and lysine 117 contribute to the 5-methyltetrahydropteroyltri-L-glutamate site. L-homocysteine is bound by residues 438 to 440 (IGS) and glutamate 491. L-methionine contacts are provided by residues 438 to 440 (IGS) and glutamate 491. Residues 522-523 (RC) and tryptophan 568 each bind 5-methyltetrahydropteroyltri-L-glutamate. Aspartate 606 lines the L-homocysteine pocket. Aspartate 606 serves as a coordination point for L-methionine. Glutamate 612 lines the 5-methyltetrahydropteroyltri-L-glutamate pocket. Positions 648, 650, and 672 each coordinate Zn(2+). Catalysis depends on histidine 701, which acts as the Proton donor. Position 733 (cysteine 733) interacts with Zn(2+).

Belongs to the vitamin-B12 independent methionine synthase family. Zn(2+) serves as cofactor.

It carries out the reaction 5-methyltetrahydropteroyltri-L-glutamate + L-homocysteine = tetrahydropteroyltri-L-glutamate + L-methionine. Its pathway is amino-acid biosynthesis; L-methionine biosynthesis via de novo pathway; L-methionine from L-homocysteine (MetE route): step 1/1. Functionally, catalyzes the transfer of a methyl group from 5-methyltetrahydrofolate to homocysteine resulting in methionine formation. This Pseudomonas paraeruginosa (strain DSM 24068 / PA7) (Pseudomonas aeruginosa (strain PA7)) protein is 5-methyltetrahydropteroyltriglutamate--homocysteine methyltransferase.